The following is a 201-amino-acid chain: FMN reductase (NADH) RutF 1 (201 aa).

The segment covering 167–195 (PRAPRSGSAPAEPARAARAVGARPAEGPA) has biased composition (low complexity). Residues 167-201 (PRAPRSGSAPAEPARAARAVGARPAEGPALALRSA) are disordered.

This sequence belongs to the non-flavoprotein flavin reductase family. RutF subfamily.

It catalyses the reaction FMNH2 + NAD(+) = FMN + NADH + 2 H(+). Catalyzes the reduction of FMN to FMNH2 which is used to reduce pyrimidine by RutA via the Rut pathway. In Methylorubrum extorquens (strain CM4 / NCIMB 13688) (Methylobacterium extorquens), this protein is FMN reductase (NADH) RutF 1.